The following is a 350-amino-acid chain: Nicotinate-nucleotide--dimethylbenzimidazole phosphoribosyltransferase (350 aa).

The active-site Proton acceptor is Glu-317.

This sequence belongs to the CobT family.

The catalysed reaction is 5,6-dimethylbenzimidazole + nicotinate beta-D-ribonucleotide = alpha-ribazole 5'-phosphate + nicotinate + H(+). It participates in nucleoside biosynthesis; alpha-ribazole biosynthesis; alpha-ribazole from 5,6-dimethylbenzimidazole: step 1/2. Catalyzes the synthesis of alpha-ribazole-5'-phosphate from nicotinate mononucleotide (NAMN) and 5,6-dimethylbenzimidazole (DMB). This is Nicotinate-nucleotide--dimethylbenzimidazole phosphoribosyltransferase from Shewanella sp. (strain MR-4).